The following is a 355-amino-acid chain: tRNA N6-adenosine threonylcarbamoyltransferase (355 aa).

His-110 and His-114 together coordinate Fe cation. Substrate contacts are provided by residues 132-136 (LVSGG), Asp-165, Gly-178, Asp-182, and Asn-288. A Fe cation-binding site is contributed by Asp-316.

This sequence belongs to the KAE1 / TsaD family. Requires Fe(2+) as cofactor.

The protein localises to the cytoplasm. It catalyses the reaction L-threonylcarbamoyladenylate + adenosine(37) in tRNA = N(6)-L-threonylcarbamoyladenosine(37) in tRNA + AMP + H(+). Required for the formation of a threonylcarbamoyl group on adenosine at position 37 (t(6)A37) in tRNAs that read codons beginning with adenine. Is involved in the transfer of the threonylcarbamoyl moiety of threonylcarbamoyl-AMP (TC-AMP) to the N6 group of A37, together with TsaE and TsaB. TsaD likely plays a direct catalytic role in this reaction. The chain is tRNA N6-adenosine threonylcarbamoyltransferase from Lawsonia intracellularis (strain PHE/MN1-00).